Reading from the N-terminus, the 333-residue chain is Probable xyloglucan endotransglucosylase/hydrolase protein 27 (333 aa).

An N-terminal signal peptide occupies residues 1-20; it reads METLSRLLVFMSLFSGLVSG. The region spanning 21–223 is the GH16 domain; the sequence is FALQNLPITS…YKYAPYIARF (203 aa). Residue Glu108 is the Nucleophile of the active site. The active-site Proton donor is the Glu112. Xyloglucan contacts are provided by residues Glu112 and 125-127; that span reads QTN. A glycan (N-linked (GlcNAc...) asparagine) is linked at Asn131. Residues 135–139, 202–203, Gly207, and Arg282 contribute to the xyloglucan site; these read HSGRE and KW. An intrachain disulfide couples Cys277 to Cys290. The interval 311–333 is disordered; sequence IPRRHRNGKHRSKRSRVDGTESI. The span at 312-324 shows a compositional bias: basic residues; sequence PRRHRNGKHRSKR.

This sequence belongs to the glycosyl hydrolase 16 family. XTH group 3 subfamily. Contains at least one intrachain disulfide bond essential for its enzymatic activity. As to expression, expressed in 7 day old seedlings, roots, hypocotyls, rosette leaves, internodes between nodes bearing axillary shoots, nodes bearing flowers, flower buds, anthers and siliques.

The protein resides in the secreted. Its subcellular location is the cell wall. It localises to the extracellular space. The protein localises to the apoplast. It carries out the reaction breaks a beta-(1-&gt;4) bond in the backbone of a xyloglucan and transfers the xyloglucanyl segment on to O-4 of the non-reducing terminal glucose residue of an acceptor, which can be a xyloglucan or an oligosaccharide of xyloglucan.. In terms of biological role, catalyzes xyloglucan endohydrolysis (XEH) and/or endotransglycosylation (XET). Cleaves and religates xyloglucan polymers, an essential constituent of the primary cell wall, and thereby participates in cell wall construction of growing tissues. Required for cell wall modification during the development of tracheary elements. This is Probable xyloglucan endotransglucosylase/hydrolase protein 27 (XTH27) from Arabidopsis thaliana (Mouse-ear cress).